We begin with the raw amino-acid sequence, 495 residues long: Beta-galactoside alpha-2,6-sialyltransferase 2 (495 aa).

Topologically, residues 1-10 are cytoplasmic; sequence MKPHLKQWRQ. A helical; Signal-anchor for type II membrane protein transmembrane segment spans residues 11 to 31; it reads GMLCGVFAWGLFFVVIFLYFT. Over 32–495 the chain is Lumenal; sequence DSSPAKPAPS…LQAVRCPPGA (464 aa). Disordered stretches follow at residues 63–90 and 107–165; these read GASEGLPEGADLRRGSPRGLPSGPLRTW and GRTS…EDGE. Over residues 134–143 the composition is skewed to low complexity; it reads PEGARPPRAA. Positions 144–153 are enriched in basic residues; it reads PGRRAKRGPR. 3 disulfide bridges follow: Cys-225-Cys-491, Cys-268-Cys-420, and Cys-438-Cys-449. Residues Asn-279 and Asn-309 are each glycosylated (N-linked (GlcNAc...) asparagine).

This sequence belongs to the glycosyltransferase 29 family.

It is found in the golgi apparatus. It localises to the golgi stack membrane. It catalyses the reaction a beta-D-galactoside + CMP-N-acetyl-beta-neuraminate = an N-acetyl-alpha-neuraminyl-(2-&gt;6)-beta-D-galactosyl derivative + CMP + H(+). Functionally, transfers sialic acid from the donor of substrate CMP-sialic acid to galactose containing acceptor substrates. Has alpha-2,6-sialyltransferase activity toward oligosaccharides that have the Gal-beta-1,4-GlcNAc sequence at the non-reducing end of their carbohydrate groups, but it has weak or no activities toward glycoproteins and glycolipids. This is Beta-galactoside alpha-2,6-sialyltransferase 2 (ST6GAL2) from Bos taurus (Bovine).